We begin with the raw amino-acid sequence, 364 residues long: MRLFHFLKFLTINNFSRYCLKIVKVHIIWITIICIIYFNWRFKKLDFMAIPYPPAVIKFNTSAKYLSSNLASSSQLGNNIFEIASLYGLSKHLNRTPLFFIENGYHKKMLDNLRKTMPRLMEKFRILNGSVPRSISETKFQRACCLHKSPWSLEKNRDEYLHLSGKYYQSWKYFPNMRNELIEFLNPTSIQIFGNLPISDDQNHVTCVHSRRGDFVEYLFYASDPKFMKNAVTFLNENEKVGSRNRKIVLFGDDLNFLETYFSDAVLSTDVGKNAEYYISQNPPIDDFLYSKNNCDVVLITAPRSTFGWWIGYFSKGNKVYYLDIKYTGDHIFESGGLIASDFYPSHWTPLKFASANSFTVVRS.

The Cytoplasmic segment spans residues 1 to 19 (MRLFHFLKFLTINNFSRYC). Residues 20 to 42 (LKIVKVHIIWITIICIIYFNWRF) traverse the membrane as a helical; Signal-anchor for type II membrane protein segment. Over 43–364 (KKLDFMAIPY…SANSFTVVRS (322 aa)) the chain is Lumenal. 2 N-linked (GlcNAc...) asparagine glycosylation sites follow: Asn60 and Asn128.

Belongs to the glycosyltransferase 11 family.

It is found in the golgi apparatus. Its subcellular location is the golgi stack membrane. Its function is as follows. Mediates the transfer of fucose to the terminal galactose on glycan chains of cell surface glycoproteins and glycolipids. Required for axon regeneration after injury. The polypeptide is Putative galactoside 2-alpha-L-fucosyltransferase svh-11 (Caenorhabditis elegans).